Reading from the N-terminus, the 541-residue chain is Chaperonin GroEL 2 (541 aa).

ATP-binding positions include 29–32 (TLGP), 86–90 (DGTTT), G413, 476–478 (NAA), and D492.

It belongs to the chaperonin (HSP60) family. In terms of assembly, forms a cylinder of 14 subunits composed of two heptameric rings stacked back-to-back. Interacts with the co-chaperonin GroES.

The protein localises to the secreted. It is found in the capsule. It localises to the cell surface. The protein resides in the cell wall. It catalyses the reaction ATP + H2O + a folded polypeptide = ADP + phosphate + an unfolded polypeptide.. Functionally, together with its co-chaperonin GroES, plays an essential role in assisting protein folding. The GroEL-GroES system forms a nano-cage that allows encapsulation of the non-native substrate proteins and provides a physical environment optimized to promote and accelerate protein folding. This Mycobacterium ulcerans (strain Agy99) protein is Chaperonin GroEL 2.